A 611-amino-acid polypeptide reads, in one-letter code: DNA-directed RNA polymerase subunit Rpo2C (611 aa).

Zn(2+)-binding residues include Cys-547, Cys-550, Cys-565, and Cys-568.

Belongs to the RNA polymerase beta chain family. As to quaternary structure, part of the RNA polymerase complex. The cofactor is Zn(2+).

The protein resides in the cytoplasm. The enzyme catalyses RNA(n) + a ribonucleoside 5'-triphosphate = RNA(n+1) + diphosphate. Its function is as follows. DNA-dependent RNA polymerase (RNAP) catalyzes the transcription of DNA into RNA using the four ribonucleoside triphosphates as substrates. The Rpo2 subunit (Rpo2N and Rpo2C in this organism) is implicated in DNA promoter recognition and in nucleotide binding. This chain is DNA-directed RNA polymerase subunit Rpo2C, found in Methanococcus vannielii (strain ATCC 35089 / DSM 1224 / JCM 13029 / OCM 148 / SB).